A 475-amino-acid polypeptide reads, in one-letter code: Protein arginine N-methyltransferase 2 (475 aa).

Residues 167–194 (EFLSDDDDEEMDVDDDEEDESRDGEETG) form a disordered region. The span at 169 to 194 (LSDDDDEEMDVDDDEEDESRDGEETG) shows a compositional bias: acidic residues. The 229-residue stretch at 247–475 (LAGSQMDYLK…EDFYLPVCTF (229 aa)) folds into the RMT2 domain. Residues Tyr254, Met285, 310 to 315 (FGLGII), 331 to 333 (EAH), 358 to 359 (WQ), and Asp378 contribute to the S-adenosyl-L-methionine site.

The protein belongs to the class I-like SAM-binding methyltransferase superfamily. RMT2 methyltransferase family. Monomer.

It is found in the cytoplasm. It localises to the nucleus. Functionally, S-adenosyl-L-methionine-dependent protein-arginine N-methyltransferase that methylates the delta-nitrogen atom of arginine residues to form N5-methylarginine (type IV) in target proteins. Monomethylates ribosomal protein L12. The chain is Protein arginine N-methyltransferase 2 from Yarrowia lipolytica (strain CLIB 122 / E 150) (Yeast).